The following is a 1332-amino-acid chain: Misshapen-like kinase 1 (1332 aa).

Residues 25-289 (FELVEVVGNG…TEQLLKFPFI (265 aa)) form the Protein kinase domain. ATP contacts are provided by residues 31–39 (VGNGTYGQV) and Lys-54. Asp-153 (proton acceptor) is an active-site residue. 3 disordered regions span residues 300–347 (IQLK…NVPG), 363–383 (KSNS…QRDP), and 395–887 (QRRI…GTMV). Residues 317–333 (EETEYEYSGSEEEDDSH) are compositionally biased toward acidic residues. Phosphoserine occurs at positions 324 and 326. Residues 371 to 380 (QQQQLQQQQQ) are compositionally biased toward low complexity. Residues 396-466 (RRIEEQKEER…EEQRQSERLQ (71 aa)) are compositionally biased toward basic and acidic residues. Positions 479 to 497 (LQQQQQQQQLQKQQQQQLL) are enriched in low complexity. Arg-501 and Arg-509 each carry omega-N-methylarginine. Residues 518–528 (AWAREVEERTR) are compositionally biased toward basic and acidic residues. The span at 547 to 561 (PEPPIPQASPGPPGP) shows a compositional bias: pro residues. Polar residues predominate over residues 598 to 608 (RSQSLQDQPTR). Ser-641 is subject to Phosphoserine. Polar residues predominate over residues 670–682 (QRTSSIATALNTS). Residue Ser-701 is modified to Phosphoserine. The span at 716–729 (PKPPGPPAQPPGPP) shows a compositional bias: pro residues. The span at 736 to 748 (DLRRSDPGWERSD) shows a compositional bias: basic and acidic residues. Phosphoserine is present on residues Ser-754, Ser-763, Ser-777, Ser-778, and Ser-782. Residues 804–821 (LLKERTLDEAPRPPKKAM) show a composition bias toward basic and acidic residues. The segment covering 828-841 (EEVESSEDDEEEGE) has biased composition (acidic residues). A mediates interaction with RAP2A region spans residues 866–1332 (MVVHDVEEIT…TLNRNCIMNW (467 aa)). Residue Thr-891 is modified to Phosphothreonine. The tract at residues 902 to 943 (DSNGYTNLPDVVQPSHSPTENSKGQSPPSKDGSGDYQSRGLV) is disordered. Over residues 915–929 (PSHSPTENSKGQSPP) the composition is skewed to polar residues. Positions 1019 to 1306 (NSEILCAALW…KFLCERNDKV (288 aa)) constitute a CNH domain.

Belongs to the protein kinase superfamily. STE Ser/Thr protein kinase family. STE20 subfamily. In terms of assembly, interacts with TANC1. Interacts with RAP2A. Isoform 4 interacts with NCK1. It depends on Mg(2+) as a cofactor. Autophosphorylated. Expressed in the brain, isoform 2 is more abundant than isoform 1. Isoform 3 is ubiquitously expressed. Isoform 1 is most abundant in the skeletal muscle. Isoform 4 is ubiquitously expressed with relative high levels in brain, skeletal muscle, pancreas and testis.

Its subcellular location is the cytoplasm. The protein resides in the postsynaptic density. The protein localises to the cell projection. It localises to the axon. It is found in the dendrite. Its subcellular location is the golgi apparatus. It catalyses the reaction L-seryl-[protein] + ATP = O-phospho-L-seryl-[protein] + ADP + H(+). The catalysed reaction is L-threonyl-[protein] + ATP = O-phospho-L-threonyl-[protein] + ADP + H(+). Its function is as follows. Serine/threonine kinase which acts as a negative regulator of Ras-related Rap2-mediated signal transduction to control neuronal structure and AMPA receptor trafficking. Required for normal synaptic density, dendrite complexity, as well as surface AMPA receptor expression in hippocampal neurons. Can activate the JNK and MAPK14/p38 pathways and mediates stimulation of the stress-activated protein kinase MAPK14/p38 MAPK downstream of the Raf/ERK pathway. Phosphorylates TANC1 upon stimulation by RAP2A, MBP and SMAD1. Has an essential function in negative selection of thymocytes, perhaps by coupling NCK1 to activation of JNK1. Activator of the Hippo signaling pathway which plays a pivotal role in organ size control and tumor suppression by restricting proliferation and promoting apoptosis. MAP4Ks act in parallel to and are partially redundant with STK3/MST2 and STK4/MST2 in the phosphorylation and activation of LATS1/2, and establish MAP4Ks as components of the expanded Hippo pathway. Isoform 4 can activate the JNK pathway. Involved in the regulation of actin cytoskeleton reorganization, cell-matrix adhesion, cell-cell adhesion and cell migration. The polypeptide is Misshapen-like kinase 1 (Homo sapiens (Human)).